The sequence spans 431 residues: Aspartokinase (431 aa).

It belongs to the aspartokinase family.

The enzyme catalyses L-aspartate + ATP = 4-phospho-L-aspartate + ADP. It functions in the pathway amino-acid biosynthesis; L-lysine biosynthesis via DAP pathway; (S)-tetrahydrodipicolinate from L-aspartate: step 1/4. Its pathway is amino-acid biosynthesis; L-methionine biosynthesis via de novo pathway; L-homoserine from L-aspartate: step 1/3. It participates in amino-acid biosynthesis; L-threonine biosynthesis; L-threonine from L-aspartate: step 1/5. The polypeptide is Aspartokinase (lysC) (Chlamydia trachomatis serovar D (strain ATCC VR-885 / DSM 19411 / UW-3/Cx)).